The primary structure comprises 251 residues: Triosephosphate isomerase (251 aa).

Residue 12–14 (NWK) coordinates substrate. The active-site Electrophile is His99. Glu169 (proton acceptor) is an active-site residue. Residues Gly175, Ser214, and 235–236 (GG) contribute to the substrate site.

This sequence belongs to the triosephosphate isomerase family. In terms of assembly, homodimer.

The protein localises to the cytoplasm. The catalysed reaction is D-glyceraldehyde 3-phosphate = dihydroxyacetone phosphate. Its pathway is carbohydrate biosynthesis; gluconeogenesis. It functions in the pathway carbohydrate degradation; glycolysis; D-glyceraldehyde 3-phosphate from glycerone phosphate: step 1/1. Its function is as follows. Involved in the gluconeogenesis. Catalyzes stereospecifically the conversion of dihydroxyacetone phosphate (DHAP) to D-glyceraldehyde-3-phosphate (G3P). In Bradyrhizobium sp. (strain BTAi1 / ATCC BAA-1182), this protein is Triosephosphate isomerase.